Reading from the N-terminus, the 367-residue chain is Outer membrane protein assembly factor BamC (367 aa).

An N-terminal signal peptide occupies residues 1-16 (MRLLPLFLMVTLAASG). Cysteine 17 carries the N-palmitoyl cysteine lipid modification. The S-diacylglycerol cysteine moiety is linked to residue cysteine 17.

This sequence belongs to the BamC family. In terms of assembly, part of the Bam complex.

The protein resides in the cell outer membrane. Part of the outer membrane protein assembly complex, which is involved in assembly and insertion of beta-barrel proteins into the outer membrane. This chain is Outer membrane protein assembly factor BamC, found in Thiobacillus denitrificans (strain ATCC 25259 / T1).